The primary structure comprises 293 residues: MSIQDFKDVNIITAFITPFKEDGSINFAALPKLIEHLLAHHTQGLLLAGTTAESPTLTHDEELELFAAVQKIVNGRVPLIAGVGTNDTRDSVNFVKEVADFGGFSAGLAIVPYYNKPTQEGLYQHFMTLADASDLPIIIYNIPGRVVTTLETDTMLRLAQHPNIIGVKECTNLDNIAYLVDNKPDDFLIFTGEDGEAFHALSLGADGVISVASHTNGDELFAMVEAIEKSDIKKAAGIQRQFLPKVHALFSVASPAPVKAVLNHQGFDAGPLRLPLVACTDEEARRIIEIVEK.

T51 is a binding site for pyruvate. The active-site Proton donor/acceptor is Y140. The Schiff-base intermediate with substrate role is filled by K168. I209 provides a ligand contact to pyruvate.

Belongs to the DapA family. As to quaternary structure, homotetramer; dimer of dimers.

The protein localises to the cytoplasm. It carries out the reaction L-aspartate 4-semialdehyde + pyruvate = (2S,4S)-4-hydroxy-2,3,4,5-tetrahydrodipicolinate + H2O + H(+). It participates in amino-acid biosynthesis; L-lysine biosynthesis via DAP pathway; (S)-tetrahydrodipicolinate from L-aspartate: step 3/4. Functionally, catalyzes the condensation of (S)-aspartate-beta-semialdehyde [(S)-ASA] and pyruvate to 4-hydroxy-tetrahydrodipicolinate (HTPA). The polypeptide is 4-hydroxy-tetrahydrodipicolinate synthase (Streptococcus mutans serotype c (strain ATCC 700610 / UA159)).